Consider the following 393-residue polypeptide: MLDPFSEKAKELLKEFGSINDFLNSIPRIVDVEEVIERVKIASDRKLLEGFVDIEDIKDLAQFYALLGALSYSPYGLELELVKKANILLYSERIRREKEIRPEEISLRINKAIEFPIDDLKKIERVFGKLPEYTIHLAEFLDLIPGERLSEYYIYNGNVYLRKEDLIKVWMKAFERNIEKSVNMLYEIRDELPGFFREVLGGIKEVAEQEFGKSGEVKAGTLRPDLFPPCVKNALKGVPQGLRNYAITVLLTSFLSYARICPNPPRRNVRVKDCIDDIRIITDEILPLIIEAANRCSPPLFEDQPNEIKNIWYHLGFGYTANPKLEDSGNSTWYFPPNCDKIRANAPQLCTPDKHCKYVRNPLTYYLRRLYLEGRKNASKGGNERGEKRVLQQ.

Residues Cys230, Cys339, Cys350, and Cys356 each contribute to the [4Fe-4S] cluster site.

It belongs to the eukaryotic-type primase large subunit family. Heterodimer of a small subunit (PriS) and a large subunit (PriL). It depends on [4Fe-4S] cluster as a cofactor.

Functionally, regulatory subunit of DNA primase, an RNA polymerase that catalyzes the synthesis of short RNA molecules used as primers for DNA polymerase during DNA replication. Stabilizes and modulates the activity of the small subunit, increasing the rate of DNA synthesis, and conferring RNA synthesis capability. The DNA polymerase activity may enable DNA primase to also catalyze primer extension after primer synthesis. May also play a role in DNA repair. Displays gap-filling and strand-displacement activities. This chain is DNA primase large subunit PriL, found in Pyrococcus abyssi (strain GE5 / Orsay).